Reading from the N-terminus, the 938-residue chain is Mediator of RNA polymerase II transcription subunit 16 (938 aa).

The protein belongs to the Mediator complex subunit 16 family. As to quaternary structure, component of the Mediator complex.

The protein localises to the nucleus. Its function is as follows. Component of the Mediator complex, a coactivator involved in the regulated transcription of nearly all RNA polymerase II-dependent genes. Mediator functions as a bridge to convey information from gene-specific regulatory proteins to the basal RNA polymerase II transcription machinery. Mediator is recruited to promoters by direct interactions with regulatory proteins and serves as a scaffold for the assembly of a functional preinitiation complex with RNA polymerase II and the general transcription factors. In Eremothecium gossypii (strain ATCC 10895 / CBS 109.51 / FGSC 9923 / NRRL Y-1056) (Yeast), this protein is Mediator of RNA polymerase II transcription subunit 16 (SIN4).